Consider the following 607-residue polypeptide: MAHEVDLESFKELERDIILRVLYRDQTVQSTEEERVRKLKSHLQHLRWKGAKSSSQEYKEKCCARCQRALGLLLNRGAVCQGCSHRVCSECRVFLRRTRAWKCTVCFEDRNVKIKTGEWFFEERARKFPTAGRRETAGAKLLQSYQRLSKISVVPPTPPPFSESQCSSSSRLQELGHFRGFNKSVENLFLSVTTQMRKLSKSQNDMTSEKHLLAMDPRQCVGHTERRSQSDTAVNVTSRKASTPDILKAFHQEDPKHPPDPVLKQDTPPSSPTHSAVFSGGLRHGSLISINSTCTEMGNFDNANVTGEIEFAIHYCVKSCSLEICIKTCKNLAYGEEKKRKCNPYVKTYLLPDRSSQGKRKTRVQKNTLDPTFEETLKYQVDPGQLMTRRLQVSVWHLGTLARRVFLGEVILPLAMWDFKDSTAQNARWYPLRAKAEKYEENIPQNNGELAVRAKLVLPAGPRKPQEAQEGQLALNGQLCLVVLGAKNLPVRSDGTLNSFVKGCLTLPNQQKLRVKSPVLKKQACPQWKHSFVFNGVSSSQLRQSTLELTVWDQAIFGMNDRLLGEARLGSKGGAAGCPDSGSQSKLQWHRVLSSPNLWTDMTLVLH.

In terms of domain architecture, RabBD spans 4–123; the sequence is EVDLESFKEL…IKTGEWFFEE (120 aa). The segment at 221–279 is disordered; sequence VGHTERRSQSDTAVNVTSRKASTPDILKAFHQEDPKHPPDPVLKQDTPPSSPTHSAVFS. Residues 230-241 are compositionally biased toward polar residues; sequence SDTAVNVTSRKA. Basic and acidic residues predominate over residues 248 to 259; it reads KAFHQEDPKHPP. 2 C2 domains span residues 305–430 and 458–590; these read VTGE…ARWY and LPAG…LQWH.

As to quaternary structure, monomer. Binds NRXN1. Binds RAB27A that has been activated by GTP-binding via its N-terminus. In terms of tissue distribution, highly expressed in spleen and lung. Detected at lower levels in heart and testis.

It is found in the endomembrane system. In terms of biological role, may act as Rab effector protein and play a role in vesicle trafficking. Binds phospholipids in the presence of calcium ions. The sequence is that of Synaptotagmin-like protein 3 (Sytl3) from Mus musculus (Mouse).